A 704-amino-acid polypeptide reads, in one-letter code: Boron transporter 1 (704 aa).

Residues 1–35 lie on the Cytoplasmic side of the membrane; the sequence is MEETFVPFEGIKNDLKGRLMCYKQDWTGGFKAGFR. The helical transmembrane segment at 36–56 threads the bilayer; sequence ILAPTTYIFFASAIPVISFGE. The Extracellular segment spans residues 57-75; it reads QLERSTDGVLTAVQTLAST. Residues 76–96 form a helical membrane-spanning segment; the sequence is AICGMIHSIIGGQPLLILGVA. The Cytoplasmic segment spans residues 97 to 120; the sequence is EPTVIMYTFMFNFAKARPELGRDL. The chain crosses the membrane as a helical span at residues 121–141; it reads FLAWSGWVCVWTALMLFVLAI. At 142 to 155 the chain is on the extracellular side; that stretch reads CGACSIINRFTRVA. A helical transmembrane segment spans residues 156–176; the sequence is GELFGLLIAMLFMQQAIKGLV. Residues 177-195 lie on the Cytoplasmic side of the membrane; it reads DEFRIPERENQKLKEFLPS. A helical transmembrane segment spans residues 196–216; the sequence is WRFANGMFALVLSFGLLLTGL. Topologically, residues 217-233 are extracellular; it reads RSRKARSWRYGTGWLRS. The helical transmembrane segment at 234–254 threads the bilayer; it reads LIADYGVPLMVLVWTGVSYIP. At 255-289 the chain is on the cytoplasmic side; the sequence is AGDVPKGIPRRLFSPNPWSPGAYGNWTVVKEMLDV. A helical membrane pass occupies residues 290–310; that stretch reads PIVYIIGAFIPASMIAVLYYF. Topologically, residues 311–337 are extracellular; sequence DHSVASQLAQQKEFNLRKPSSYHYDLL. A helical transmembrane segment spans residues 338 to 358; the sequence is LLGFLTLMCGLLGVPPSNGVI. The Cytoplasmic segment spans residues 359 to 480; sequence PQSPMHTKSL…STMVGGCVAA (122 aa). The chain crosses the membrane as a helical span at residues 481-501; it reads MPILKMIPTSVLWGYFAFMAI. Over 502–557 the chain is Extracellular; the sequence is ESLPGNQFWERILLLFTAPSRRFKVLEDYHATFVETVPFKTIAMFTLFQTTYLLIC. Residues 558-578 traverse the membrane as a helical segment; the sequence is FGLTWIPIAGVMFPLMIMFLI. Topologically, residues 579–704 are cytoplasmic; the sequence is PVRQYLLPRF…RSPLNQSSSN (126 aa). A disordered region spans residues 641-704; the sequence is EFRHTSSPKV…RSPLNQSSSN (64 aa). A compositionally biased stretch (low complexity) spans 647-664; that stretch reads SPKVTSSSSTPVNNRSLS.

The protein belongs to the anion exchanger (TC 2.A.31.3) family. Expressed in proximal side of various root cells, notably in the columella, lateral root cap, epidermis and endodermis in tip and elongation zones of the root. Also detected in the epidermis, cortex, endodermis, and stele cells of the root hair zone. Observed in cotyledons and hypocotyls.

Its subcellular location is the cell membrane. It is found in the endosome membrane. The protein resides in the vacuole membrane. In terms of biological role, efflux-type boron (B) transporter for xylem loading, responsive of boron translocation from roots to shoots under boron limitation. Boron is essential for maintaining the integrity of plants cell walls. The polypeptide is Boron transporter 1 (Arabidopsis thaliana (Mouse-ear cress)).